The chain runs to 20 residues: Poneritoxin (20 aa).

Met-18 is subject to Methionine sulfoxide; in form U1-PONTX-Dq3c. Lys-19 carries the lysine amide; in form U1-PONTX-Dq3a and U1-PONTX-Dq3c modification.

Post-translationally, the peptide spanning residues 2 to 19 occurs in 3 forms and has been given 3 different names. U1-PONTX-Dq3a has an amidated Lys-19, U1-PONTX-Dq3c has an amidated Lys-19 and an oxidized Met-18, and U1-PONTX-Dq3b has no modifications at either Met-18 or Lys-19. In terms of tissue distribution, expressed by the venom gland.

The protein localises to the secreted. Functionally, may have antimicrobial properties, like most ant linear peptides. In Dinoponera quadriceps (South American ant), this protein is Poneritoxin.